Here is an 874-residue protein sequence, read N- to C-terminus: Alanine--tRNA ligase (874 aa).

Zn(2+)-binding residues include H562, H566, C663, and H667.

It belongs to the class-II aminoacyl-tRNA synthetase family. Zn(2+) is required as a cofactor.

It is found in the cytoplasm. The catalysed reaction is tRNA(Ala) + L-alanine + ATP = L-alanyl-tRNA(Ala) + AMP + diphosphate. Catalyzes the attachment of alanine to tRNA(Ala) in a two-step reaction: alanine is first activated by ATP to form Ala-AMP and then transferred to the acceptor end of tRNA(Ala). Also edits incorrectly charged Ser-tRNA(Ala) and Gly-tRNA(Ala) via its editing domain. This Bordetella pertussis (strain Tohama I / ATCC BAA-589 / NCTC 13251) protein is Alanine--tRNA ligase.